Reading from the N-terminus, the 188-residue chain is COMM domain-containing protein 1 (188 aa).

Positions 1–122 (MAGDLEGGKS…RWDNGLRGLS (122 aa)) are sufficient for interaction with SLC12A2. 3 residues coordinate Cu cation: histidine 100, methionine 109, and histidine 133. A COMM domain is found at 117–185 (GLRGLSWRVD…EVEESINRLM (69 aa)). Positions 124–188 (RVDGKSQSRH…ESINRLMQAA (65 aa)) are required for binding to PtdIns(4,5)P2.

This sequence belongs to the COMM domain-containing protein 1 family. Component of the commander complex consisting of the CCC subcomplex and the retriever subcomplex. Component of the CCC (COMMD/CCDC22/CCDC93) subcomplex consisting of COMMD1, COMMD2, COMMD3, COMMD4, COMMD5, COMMD6, COMMD7, COMMD8, COMMD9, COMMD10, CCDC22 and CCDC93; within the complex forms a heterodimer with COMMD6. Interacts with VPS35L; the interaction associates the CCC complex with the retriever complex. Identified in a complex with an E3 ubiquitin ligase complex composed of TCEB1/elongin C, CUL2, SOCS1 and RBX1; in the complex interacts directly with SOCS1 and CUL2. Identified in a complex with NF-kappa-B. Interacts directly with SLC12A2. Interacts directly with ATP7B (via the N-terminal region). Interacts with ATP7A. Interacts with FAM107A; this interaction stabilizes COMMD1 in the nucleus. Interacts with CCS, CDKN2A, RELA, REL, RELB, NFKB1/p105, NFKB2/p100, NFKBIB, SCNN1D, SCNN1B, CFTR, CLU, SGK1, AKT1, CUL1, CUL2, CUL3, CUL4A, CUL4B, CUL5, CUL7, HIF1A. In terms of processing, ubiquitinated; undergoes both 'Lys-63'- and 'Lys-48'-linked polyubiquitination. Ubiquitinated by XIAP, leading to its proteasomal degradation.

It localises to the nucleus. It is found in the cytoplasm. The protein localises to the endosome membrane. The protein resides in the cytoplasmic vesicle. Its subcellular location is the early endosome. It localises to the recycling endosome. Its function is as follows. Scaffold protein in the commander complex that is essential for endosomal recycling of transmembrane cargos; the commander complex is composed of the CCC subcomplex and the retriever subcomplex. Can modulate activity of cullin-RING E3 ubiquitin ligase (CRL) complexes by displacing CAND1; in vitro promotes CRL E3 activity and dissociates CAND1 from CUL1 and CUL2. Promotes ubiquitination of NF-kappa-B subunit RELA and its subsequent proteasomal degradation. Down-regulates NF-kappa-B activity. Involved in the regulation of membrane expression and ubiquitination of SLC12A2. Modulates Na(+) transport in epithelial cells by regulation of apical cell surface expression of amiloride-sensitive sodium channel (ENaC) subunits and by promoting their ubiquitination presumably involving NEDD4L. Promotes the localization of SCNN1D to recycling endosomes. Promotes CFTR cell surface expression through regulation of its ubiquitination. Down-regulates SOD1 activity by interfering with its homodimerization. Plays a role in copper ion homeostasis. Involved in copper-dependent ATP7A trafficking between the trans-Golgi network and vesicles in the cell periphery; the function is proposed to depend on its association within the CCC complex and cooperation with the WASH complex on early endosomes. Can bind one copper ion per monomer. May function to facilitate biliary copper excretion within hepatocytes. Binds to phosphatidylinositol 4,5-bisphosphate (PtdIns(4,5)P2). Involved in the regulation of HIF1A-mediated transcription; competes with ARNT/Hif-1-beta for binding to HIF1A resulting in decreased DNA binding and impaired transcriptional activation by HIF-1. Negatively regulates neuroblastoma G1/S phase cell cycle progression and cell proliferation by stimulating ubiquitination of NF-kappa-B subunit RELA and NF-kappa-B degradation in a FAM107A- and actin-dependent manner. The sequence is that of COMM domain-containing protein 1 (Commd1) from Mus musculus (Mouse).